A 268-amino-acid polypeptide reads, in one-letter code: Glucosamine-6-phosphate deaminase (268 aa).

D67 acts as the Proton acceptor; for enolization step in catalysis. Catalysis depends on N137, which acts as the For ring-opening step. H139 functions as the Proton acceptor; for ring-opening step in the catalytic mechanism. E144 serves as the catalytic For ring-opening step.

Belongs to the glucosamine/galactosamine-6-phosphate isomerase family. NagB subfamily. Homohexamer.

It catalyses the reaction alpha-D-glucosamine 6-phosphate + H2O = beta-D-fructose 6-phosphate + NH4(+). Its pathway is amino-sugar metabolism; N-acetylneuraminate degradation; D-fructose 6-phosphate from N-acetylneuraminate: step 5/5. Catalyzes the reversible isomerization-deamination of glucosamine 6-phosphate (GlcN6P) to form fructose 6-phosphate (Fru6P) and ammonium ion. This Colwellia psychrerythraea (strain 34H / ATCC BAA-681) (Vibrio psychroerythus) protein is Glucosamine-6-phosphate deaminase.